We begin with the raw amino-acid sequence, 126 residues long: MEKALSLVVFIIFSIMLASVENKVNANTCIEGIGNCQQCDVRCKARHGPAAKGACDSKFQLCTCNYPCGQGPSPPQPKKCYGGAGICSDRCGAQCCNQNCAQKYNQGSGFCDSIGNTSLCKCQYNC.

The signal sequence occupies residues 1–26 (MEKALSLVVFIIFSIMLASVENKVNA). 8 disulfide bridges follow: C29/C68, C36/C55, C39/C62, C43/C64, C80/C126, C91/C111, C96/C120, and C100/C122.

This sequence belongs to the DEFL family.

It is found in the secreted. The protein is Defensin-like protein 183 (LCR19) of Arabidopsis thaliana (Mouse-ear cress).